We begin with the raw amino-acid sequence, 286 residues long: Foldase protein PrsA 1 (286 aa).

The first 18 residues, Met-1–Ala-18, serve as a signal peptide directing secretion. Cys-19 is lipidated: N-palmitoyl cysteine. Cys-19 is lipidated: S-diacylglycerol cysteine. The PpiC domain occupies Lys-130–Asp-220.

Belongs to the PrsA family.

It is found in the cell membrane. It carries out the reaction [protein]-peptidylproline (omega=180) = [protein]-peptidylproline (omega=0). In terms of biological role, plays a major role in protein secretion by helping the post-translocational extracellular folding of several secreted proteins. The chain is Foldase protein PrsA 1 (prsA1) from Bacillus cereus (strain ATCC 14579 / DSM 31 / CCUG 7414 / JCM 2152 / NBRC 15305 / NCIMB 9373 / NCTC 2599 / NRRL B-3711).